Reading from the N-terminus, the 97-residue chain is Type VII secretion system extracellular protein A (97 aa).

Residues 61–93 (KVEKFAQLLEEIKQQLNSTADAVQEQDQQLSNN) are a coiled coil.

The protein belongs to the WXG100 family. sagEsxA-like subfamily. As to quaternary structure, forms both homodimers and heterodimers with EsxC.

The protein resides in the secreted. In terms of biological role, virulence factor that is important for the establishment of infection in the host. EsxA is required for EsxB synthesis as well as secretion. Modulates host cell apoptotic pathways and mediates together with EsxB the release of S.aureus from the host cell. By acting on apoptosis, plays a role in the modulation of dendritic cell-mediated immunity. This chain is Type VII secretion system extracellular protein A, found in Staphylococcus aureus (strain USA300).